The following is a 257-amino-acid chain: 4-hydroxy-tetrahydrodipicolinate reductase (257 aa).

Residues 11–16 (GANGRM) and glutamate 37 each bind NAD(+). Arginine 38 serves as a coordination point for NADP(+). Residues 86–88 (GST) and 110–113 (SGNY) contribute to the NAD(+) site. Residue histidine 144 is the Proton donor/acceptor of the active site. Histidine 145 serves as a coordination point for (S)-2,3,4,5-tetrahydrodipicolinate. Catalysis depends on lysine 148, which acts as the Proton donor. Residue 154–155 (GT) participates in (S)-2,3,4,5-tetrahydrodipicolinate binding.

Belongs to the DapB family.

Its subcellular location is the cytoplasm. It catalyses the reaction (S)-2,3,4,5-tetrahydrodipicolinate + NAD(+) + H2O = (2S,4S)-4-hydroxy-2,3,4,5-tetrahydrodipicolinate + NADH + H(+). The catalysed reaction is (S)-2,3,4,5-tetrahydrodipicolinate + NADP(+) + H2O = (2S,4S)-4-hydroxy-2,3,4,5-tetrahydrodipicolinate + NADPH + H(+). It participates in amino-acid biosynthesis; L-lysine biosynthesis via DAP pathway; (S)-tetrahydrodipicolinate from L-aspartate: step 4/4. Catalyzes the conversion of 4-hydroxy-tetrahydrodipicolinate (HTPA) to tetrahydrodipicolinate. In Caulobacter vibrioides (strain ATCC 19089 / CIP 103742 / CB 15) (Caulobacter crescentus), this protein is 4-hydroxy-tetrahydrodipicolinate reductase.